The following is a 157-amino-acid chain: Small ribosomal subunit protein uS7 (157 aa).

The protein belongs to the universal ribosomal protein uS7 family. Part of the 30S ribosomal subunit. Contacts proteins S9 and S11.

In terms of biological role, one of the primary rRNA binding proteins, it binds directly to 16S rRNA where it nucleates assembly of the head domain of the 30S subunit. Is located at the subunit interface close to the decoding center, probably blocks exit of the E-site tRNA. This chain is Small ribosomal subunit protein uS7, found in Phenylobacterium zucineum (strain HLK1).